Consider the following 170-residue polypeptide: uncharacterized protein (170 aa).

Residues 96–116 (FSAISIGSFPIVLFLSLFFFD) form a helical membrane-spanning segment.

The protein resides in the membrane. This is an uncharacterized protein from Borreliella burgdorferi (strain ATCC 35210 / DSM 4680 / CIP 102532 / B31) (Borrelia burgdorferi).